The sequence spans 347 residues: Protein RecA (347 aa).

Residue Gly-65–Thr-72 participates in ATP binding. Over residues Lys-327 to Glu-336 the composition is skewed to basic and acidic residues. Residues Lys-327–Met-347 are disordered. Residues Glu-337–Met-347 show a composition bias toward acidic residues.

This sequence belongs to the RecA family.

Its subcellular location is the cytoplasm. Can catalyze the hydrolysis of ATP in the presence of single-stranded DNA, the ATP-dependent uptake of single-stranded DNA by duplex DNA, and the ATP-dependent hybridization of homologous single-stranded DNAs. It interacts with LexA causing its activation and leading to its autocatalytic cleavage. This Xylella fastidiosa (strain M23) protein is Protein RecA.